A 276-amino-acid chain; its full sequence is MTDTTNSIKHVISPLARQTLQDRDLTRPVAGKRPIRLLPWLQVVKIGGRVMDRGADAILPLVEELRKLLPEHRLLILTGAGVRARHVFSVGLDLGLPVGSLAPLAASEAGQNGHILAAMLASEGVSYVEHPTVADQLAIHLSATRAVVGSAFPPYHHHEFPGSRIPPHRADTGAFLLADAFGAAGLTIVENVDGIYTADPNGPDRGQARFLPETSATDLAKSEGPLPVDRALLDVMATARHIERVQVVNGLVPGRLTAALRGEHVGTLIRTGVRPA.

Octamer consisting of 4 alpha and 4 beta chains.

Its subcellular location is the cytoplasm. Functionally, intracellular storage of molybdenum. Binds polyoxomolybdates. Can bind at least 90 molybdenum atoms per protein molecule. The sequence is that of Molybdenum storage protein subunit alpha from Azotobacter vinelandii (strain DJ / ATCC BAA-1303).